We begin with the raw amino-acid sequence, 1176 residues long: Chromosome partition protein Smc (1176 aa).

32–39 (PNGCGKSN) lines the ATP pocket. Residues 169–506 (GVSRYKERRR…VKLQEDVQKQ (338 aa)) are a coiled coil. Residues 521–623 (LGRLWQKLHI…TAPDLGQALA (103 aa)) enclose the SMC hinge domain. Coiled-coil stretches lie at residues 653–947 (DSEQ…LAAM) and 987–1024 (ERKE…LQAT).

Belongs to the SMC family. As to quaternary structure, homodimer.

It localises to the cytoplasm. Required for chromosome condensation and partitioning. This is Chromosome partition protein Smc from Bordetella petrii (strain ATCC BAA-461 / DSM 12804 / CCUG 43448).